A 952-amino-acid polypeptide reads, in one-letter code: Eukaryotic translation initiation factor 3 subunit A (952 aa).

A PCI domain is found at 315–491 (HAERAGIVND…QTITFVSTPP (177 aa)). Positions 522 to 849 (DAFAAAIAQA…RRQAEKAAAT (328 aa)) form a coiled coil. Basic and acidic residues predominate over residues 757–797 (EKVIKRKREEKERKLKEAREAEERKRKEEEEAAQKAEEEAR). Positions 757-952 (EKVIKRKREE…RGMPSTRGGA (196 aa)) are disordered. The segment covering 798–809 (AAAALEAEAAAA) has biased composition (low complexity). The segment covering 810–844 (EQRRAEREAQRQSDLERIRAQQEREEEALRRRQAE) has biased composition (basic and acidic residues). Composition is skewed to low complexity over residues 856–878 (RPPARAGTTPPTASPAPSSGGPS) and 893–918 (GAPVASSPKPVPSNSAAASAPASNGP).

It belongs to the eIF-3 subunit A family. Component of the eukaryotic translation initiation factor 3 (eIF-3) complex.

The protein resides in the cytoplasm. RNA-binding component of the eukaryotic translation initiation factor 3 (eIF-3) complex, which is involved in protein synthesis of a specialized repertoire of mRNAs and, together with other initiation factors, stimulates binding of mRNA and methionyl-tRNAi to the 40S ribosome. The eIF-3 complex specifically targets and initiates translation of a subset of mRNAs involved in cell proliferation. This chain is Eukaryotic translation initiation factor 3 subunit A, found in Cryptococcus neoformans var. neoformans serotype D (strain B-3501A) (Filobasidiella neoformans).